The sequence spans 997 residues: MDLIRKNYAELVQRMGRTIAVQITNDLFTRNILSMGEMEEILSCKVAQDLTRELLNVILKKGTESCTRLLQSLENQDPFFYEDLIGQRVQSGVTEEDLENLADHLKRLYQYPFFKKFNPLGEDTDIDIIFDLDRTFTDPLLWRKGTLNRREKQLTLSEMLEQLESPCVIEGEAGKGKTTILKRIAMLWASEKCRALADFKLVFFVTLRGASEGLYETLSDQLFPITYSWNKKEFLNKIWHLGRKVLFLLDGYDEFQSESCTEIEELIKNNPKFNSTVIVSTRTETIGKLRRCGALIAETSDFSLDNAKQLIANVLEEDEANGLLFQLEESSFMQNLMKTPLFVVIACALRMGESDFQMNTQTTLFSTLYDLMVEKKKYKIRHLSANILAANIRKFGDLALDGLFEQRFDFNEKHLSKIKEEVLLNIGLLNKYTAQRRKAVYRYFHTTFQEYIAGRRLSQLLSSEDNSDVTKGEDFLNKIVSVFDITTKYKNLLLYTCGSSKVATQKVVKHVAEVHKHDKNNYSTELVEFGLNLFFESSTKKELSQDFETLFSEKCLYINSHNISSHHIEFFLYLPNCLSALQLIKLDLSGTFATVPSESTMDRDSKSAQSSVCDNYIPEKAVKLFFDWNQSIQTLEVTLRDFHQLNKKDIKYLGKICCSADSLRLNIKRSSGITGSLVGVLESCKNIQDLNVDSTKLSIEDERRIVQMTEMKTLSILNLHSEHLQGGLLEGLCNLVGLEKLVFHNIKIDKNDAKTLAEGILSLKKLKRLSISHISNIGDGMESIAESISLCCHELKELKLIDCCLSAKALRSLGQSLYSLSHIEILDLSGNYLLEEGKESVEELAANLTHLDAIRTLMLPGGTDVKFCLEAVLPTLRRIPTLSELAFKRWNLTNDDLMTLASYINSGFENLSFLDLSDNCAQSAGWLSLTAILQYLPNLTYVNFSTEDLFTPDPDLVRKLVRAISALPLLHTMELNNWQLDDFDLAQIKKAKNMIHR.

The 88-residue stretch at 1-88 (MDLIRKNYAE…FFYEDLIGQR (88 aa)) folds into the CARD domain. Residues 95–300 (EEDLENLADH…RCGALIAETS (206 aa)) form a nucleotide-binding domain (NBD) region. One can recognise an NACHT domain in the interval 165 to 478 (SPCVIEGEAG…VTKGEDFLNK (314 aa)). Residue 171-178 (GEAGKGKT) coordinates ATP. Residues 358-465 (MNTQTTLFST…RLSQLLSSED (108 aa)) form a winged-helix domain (WHD) region. 12 LRR repeats span residues 550–570 (LFSE…HIEF), 629–652 (NQSI…DIKY), 708–731 (MTEM…LLEG), 735–758 (LVGL…TLAE), 760–785 (ILSL…ESIA), 797–820 (ELKL…LYSL), 821–843 (SHIE…SVEE), 851–875 (LDAI…VLPT), 884–905 (ELAF…SYIN), 908–935 (FENL…ILQY), 937–958 (PNLT…DLVR), and 972–994 (TMEL…AKNM).

The protein resides in the cytoplasm. It localises to the cytosol. In terms of biological role, key component of inflammasomes that indirectly senses specific proteins from pathogenic bacteria and fungi and responds by assembling an inflammasome complex that promotes caspase-1 activation, cytokine production and macrophage pyroptosis. The chain is NLR family CARD domain-containing protein 4 (nlrc4) from Xenopus tropicalis (Western clawed frog).